Consider the following 235-residue polypeptide: Large ribosomal subunit protein uL1 (235 aa).

The protein belongs to the universal ribosomal protein uL1 family. In terms of assembly, part of the 50S ribosomal subunit.

Binds directly to 23S rRNA. The L1 stalk is quite mobile in the ribosome, and is involved in E site tRNA release. Functionally, protein L1 is also a translational repressor protein, it controls the translation of the L11 operon by binding to its mRNA. This is Large ribosomal subunit protein uL1 from Synechococcus sp. (strain CC9311).